Reading from the N-terminus, the 291-residue chain is Glycine--tRNA ligase alpha subunit (291 aa).

This sequence belongs to the class-II aminoacyl-tRNA synthetase family. As to quaternary structure, tetramer of two alpha and two beta subunits.

The protein resides in the cytoplasm. The catalysed reaction is tRNA(Gly) + glycine + ATP = glycyl-tRNA(Gly) + AMP + diphosphate. In Geotalea uraniireducens (strain Rf4) (Geobacter uraniireducens), this protein is Glycine--tRNA ligase alpha subunit.